The following is a 434-amino-acid chain: MLRDEDRIFTNIYGLKDKSLRGAMARGHWDGTKQFLEKGRDWIINEVKASGLRGRGGAGFPTGLKWSFMPKESDGRPHYLVVNADESEPGTCKDRDIMRHDPHTLIEGCVIASFAMGAHAAYIYVRGEFIREREALQAAIDECYEYGLLGKNNKLGYDIDIYVHHGAGAYICGEETALLESLEGKKGQPRLKPPFPANMGLYGCPTTVNNVESIAVTPTILRRGAGWYTSFGRPNNHGTKLYSVSGHVNRPCTVEDAMSIPFHELIEKHCGGIRGGWDNLLAVIPGGSSVPCVPGAQMKDAIMDYDGLRELGSGLGTAAVIVMDKSTDIIKAIWRLSAFYKHESCGQCTPCREGTGWMMRVMERMVQGRAQKREIDMLFDVTKQVEGHTICALGDAAAWPIQGLIKHFRPEMEKRIDEYTRNATSHGAVLEAAE.

Position 54-63 (54-63 (GRGGAGFPTG)) interacts with NAD(+). 166–213 (GAGAYICGEETALLESLEGKKGQPRLKPPFPANMGLYGCPTTVNNVES) contacts FMN. Positions 345, 348, 351, and 391 each coordinate [4Fe-4S] cluster.

This sequence belongs to the complex I 51 kDa subunit family. It depends on FMN as a cofactor. The cofactor is [4Fe-4S] cluster.

It catalyses the reaction a quinone + NADH + 5 H(+)(in) = a quinol + NAD(+) + 4 H(+)(out). Its function is as follows. NDH-1 shuttles electrons from NADH, via FMN and iron-sulfur (Fe-S) centers, to quinones in the respiratory chain. The immediate electron acceptor for the enzyme in this species is believed to be ubiquinone. Couples the redox reaction to proton translocation (for every two electrons transferred, four hydrogen ions are translocated across the cytoplasmic membrane), and thus conserves the redox energy in a proton gradient. The chain is NADH-quinone oxidoreductase subunit F 1 (nuoF1) from Rhizobium meliloti (strain 1021) (Ensifer meliloti).